A 363-amino-acid chain; its full sequence is Adenosine deaminase (363 aa).

Zn(2+) is bound by residues His42 and His44. A purine D-ribonucleoside contacts are provided by residues 44 to 46, Asp172, and Gly201; that span reads HLD. The segment at 170 to 184 is gating helix loop; regulates binding affinity for substrates and thus substrate selectivity; the sequence is IGDTGHRAADIKASA. Zn(2+) is bound at residue His226. A purine D-ribonucleoside is bound by residues Glu229, His253, and Asp310. Residue Asp310 coordinates Zn(2+).

This sequence belongs to the metallo-dependent hydrolases superfamily. Adenosine and AMP deaminases family. Zn(2+) is required as a cofactor.

It carries out the reaction adenosine + H2O + H(+) = inosine + NH4(+). It catalyses the reaction S-methyl-5'-thioadenosine + H2O + H(+) = S-methyl-5'-thioinosine + NH4(+). The protein operates within purine metabolism; purine nucleoside salvage. Inhibited by coformycin and methylthiocoformycin (MT-coformycin). In terms of biological role, catalyzes the hydrolytic deamination of adenosine to produce inosine. Unlike mammalian adenosine deaminases, also catalyzes the deamination of 5'-methylthioadenosine (MTA), a by-product of polyamine biosynthesis, to produce 5'-methylthioinosine (MTI). Plays an essential role in the purine salvage pathway which allows the parasite to use host cell purines for the synthesis of nucleic acids. This is Adenosine deaminase from Plasmodium knowlesi.